Consider the following 142-residue polypeptide: MKTFVAKPAAVKRDWYVVDAEGKTLGRIATEIASRLRGKHKAEYTPHVDTGDYIIVINAEKVRVTGNKAAGKIYYRHSEFPGGLKSISFEKLIDRKPEMVIELAVKGMLPRGPLGRAMYRKLKVYAGVEHNHSAQQPQVLDI.

Belongs to the universal ribosomal protein uL13 family. Part of the 50S ribosomal subunit.

Functionally, this protein is one of the early assembly proteins of the 50S ribosomal subunit, although it is not seen to bind rRNA by itself. It is important during the early stages of 50S assembly. This is Large ribosomal subunit protein uL13 from Aliivibrio salmonicida (strain LFI1238) (Vibrio salmonicida (strain LFI1238)).